The chain runs to 435 residues: Cyclin-dependent kinase 15 (435 aa).

In terms of domain architecture, Protein kinase spans 103–387 (YLNLEKLGEG…AQEALVHDYF (285 aa)). ATP is bound by residues 109-117 (LGEGSYATV) and Lys-132. Asp-224 acts as the Proton acceptor in catalysis.

The protein belongs to the protein kinase superfamily. CMGC Ser/Thr protein kinase family. CDC2/CDKX subfamily. Mg(2+) is required as a cofactor.

The catalysed reaction is L-seryl-[protein] + ATP = O-phospho-L-seryl-[protein] + ADP + H(+). It carries out the reaction L-threonyl-[protein] + ATP = O-phospho-L-threonyl-[protein] + ADP + H(+). Functionally, serine/threonine-protein kinase that acts like an antiapoptotic protein that counters TRAIL/TNFSF10-induced apoptosis by inducing phosphorylation of BIRC5 at 'Thr-34'. The polypeptide is Cyclin-dependent kinase 15 (CDK15) (Homo sapiens (Human)).